We begin with the raw amino-acid sequence, 513 residues long: Sugar transport protein MST8 (513 aa).

The Cytoplasmic segment spans residues M1–P17. The chain crosses the membrane as a helical span at residues G18–F38. The Extracellular portion of the chain corresponds to G39–E81. Residues L82 to S102 form a helical membrane-spanning segment. Over V103–G116 the chain is Cytoplasmic. A helical transmembrane segment spans residues G117 to L137. Over I138–I139 the chain is Extracellular. The chain crosses the membrane as a helical span at residues G140–S160. The Cytoplasmic segment spans residues E161–R166. The chain crosses the membrane as a helical span at residues M167–N187. Over L188–G201 the chain is Extracellular. Residues W202 to F222 traverse the membrane as a helical segment. The Cytoplasmic portion of the chain corresponds to L223 to L294. A helical membrane pass occupies residues Q295–G315. Residues F316–A320 are Extracellular-facing. A helical transmembrane segment spans residues S321–A341. Topologically, residues T342–G347 are cytoplasmic. The chain crosses the membrane as a helical span at residues R348–T368. At L369–G385 the chain is on the extracellular side. Residues Y386–G406 traverse the membrane as a helical segment. The Cytoplasmic portion of the chain corresponds to P407–A425. A helical membrane pass occupies residues Q426–M446. Over M447–H450 the chain is Extracellular. The chain crosses the membrane as a helical span at residues L451–F471. The Cytoplasmic portion of the chain corresponds to F472–T512.

The protein belongs to the major facilitator superfamily. Sugar transporter (TC 2.A.1.1) family. Expressed specifically in anthers.

The protein localises to the membrane. Mediates active uptake of hexoses by sugar:proton symport. May play an important role in transporting monosaccharides during anther development. The sequence is that of Sugar transport protein MST8 from Oryza sativa subsp. japonica (Rice).